We begin with the raw amino-acid sequence, 335 residues long: Urokinase plasminogen activator surface receptor (335 aa).

The first 22 residues, 1–22 (MGHPPLLPLLLLLHTCVPASWG), serve as a signal peptide directing secretion. UPAR/Ly6 domains are found at residues 23–114 (LRCM…RSRY), 115–213 (LECI…PQNG), and 214–305 (RQCY…YRSG). 3 cysteine pairs are disulfide-bonded: C25–C46, C28–C34, and C39–C67. N-linked (GlcNAc...) asparagine glycosylation is present at N74. 11 cysteine pairs are disulfide-bonded: C93-C98, C117-C144, C120-C127, C137-C169, C175-C192, C193-C198, C216-C244, C219-C227, C237-C263, C269-C287, and C288-C293. An N-linked (GlcNAc...) asparagine glycan is attached at N124. Residues N184, N194, N222, and N255 are each glycosylated (N-linked (GlcNAc...) asparagine). The GPI-anchor amidated glycine moiety is linked to residue G305. Positions 306-335 (AAPQPGPAHLSLTITLLMTARLWGGTLLWT) are cleaved as a propeptide — removed in mature form.

As to quaternary structure, monomer. Interacts (via the UPAR/Ly6 domains) with SRPX2. Interacts with MRC2. Interacts with FAP (seprase); the interaction occurs at the cell surface of invadopodia membrane. Interacts with SORL1 (via N-terminal ectodomain); this interaction decreases PLAUR internalization. The ternary complex composed of PLAUR-PLAU-SERPINE1 also interacts with SORL1. Interacts with CD82; this interaction prevents PLAUR from binding to its high affinity ligand PLAU.

It localises to the cell membrane. The protein localises to the cell projection. It is found in the invadopodium membrane. Acts as a receptor for urokinase plasminogen activator. Plays a role in localizing and promoting plasmin formation. Mediates the proteolysis-independent signal transduction activation effects of U-PA. It is subject to negative-feedback regulation by U-PA which cleaves it into an inactive form. The sequence is that of Urokinase plasminogen activator surface receptor (PLAUR) from Pan troglodytes (Chimpanzee).